An 84-amino-acid chain; its full sequence is Hirudin-HM2 (84 aa).

The N-terminal stretch at 1 to 20 (MFSLKLFVVFLAVCICVSQA) is a signal peptide. The interaction with thrombin active site stretch occupies residues 21–23 (VSY). 3 disulfide bridges follow: Cys26/Cys34, Cys36/Cys48, and Cys42/Cys57. The disordered stretch occupies residues 53 to 84 (SGNQCVHGEGTPKPKSQTEGDFEEIPDEDILN). Thr63 carries O-linked (GalNAc...) threonine glycosylation. Residues 72–84 (GDFEEIPDEDILN) show a composition bias toward acidic residues. The segment at 73-84 (DFEEIPDEDILN) is interaction with fibrinogen-binding exosite of thrombin.

It belongs to the protease inhibitor I14 (hirudin) family.

The protein localises to the secreted. Functionally, hirudin is a potent thrombin-specific protease inhibitor. It forms a stable non-covalent complex with alpha-thrombin, thereby abolishing its ability to cleave fibrinogen. This is Hirudin-HM2 from Hirudinaria manillensis (Asian medical leech).